The sequence spans 360 residues: Sorbitol dehydrogenase (360 aa).

Cys42 provides a ligand contact to Zn(2+). Tyr48 provides a ligand contact to substrate. The Zn(2+) site is built by His67 and Glu68. Substrate is bound at residue Glu153. Residues Asp201, Arg206, 277 to 279 (AGN), and 301 to 303 (SFR) each bind NAD(+). Substrate is bound by residues Arg303 and Tyr304.

Belongs to the zinc-containing alcohol dehydrogenase family. As to quaternary structure, homotetramer. Requires Zn(2+) as cofactor.

It catalyses the reaction keto-D-fructose + NADH + H(+) = D-sorbitol + NAD(+). Functionally, polyol dehydrogenase that catalyzes the reversible NAD(+)-dependent oxidation of various sugar alcohols. Is active with D-sorbitol (D-glucitol) as substrate, leading to the C2-oxidized product D-fructose. Suppresses growth arrest induced by a p53 tumor mutant in fission yeast. In Schizosaccharomyces pombe (strain 972 / ATCC 24843) (Fission yeast), this protein is Sorbitol dehydrogenase (tms1).